Here is a 259-residue protein sequence, read N- to C-terminus: MKGRMFCASQASTAICSSMDHVHKSTTTDEDERNSGRAIDRHNPIIKDGRRSFADDFIKLPTSAEDGEMSNKKLEIYKGRRSITGRRSTGGGGGGGAAALLKLITNDIGLARKSFSCVARPACDLIKTPVGSTRYLLGSDPDSITGSVDQDPAKTVEAEAPAGEDKTLTEKKTTCGDTDQQVVVLKVSLHCRGCEGKVRKHLARMQGVTSFNIDFAAKKVTVTGDITPLEILDSISKVKNAQFWTNPTIPKPNVETQNP.

The interval 141-165 is disordered; it reads PDSITGSVDQDPAKTVEAEAPAGED. The segment covering 151 to 165 has biased composition (basic and acidic residues); sequence DPAKTVEAEAPAGED. One can recognise an HMA domain in the interval 180 to 246; sequence QQVVVLKVSL…KVKNAQFWTN (67 aa). Residues Cys-191 and Cys-194 each contribute to the a metal cation site.

The polypeptide is Protein SODIUM POTASSIUM ROOT DEFECTIVE 2 (Arabidopsis thaliana (Mouse-ear cress)).